A 523-amino-acid chain; its full sequence is Protein NAM8 (523 aa).

The segment at 1 to 35 is disordered; it reads MSYKQTTYYPSRGNLVRNDSSPYTNTISSETNNSS. Low complexity predominate over residues 24–35; sequence TNTISSETNNSS. RRM domains lie at 54–145, 163–242, and 313–385; these read NQLY…WATS, CSIF…PTSG, and TTVF…WGRS. The segment at 239–260 is disordered; it reads PTSGQQQHVSGNNDYNRSSSSL. A compositionally biased stretch (polar residues) spans 240–260; it reads TSGQQQHVSGNNDYNRSSSSL.

As to quaternary structure, component of the U1 small nuclear ribonucleoprotein complex (U1 snRNP).

In terms of biological role, component of the U1 small nuclear ribonucleoprotein complex (U1 snRNP) involved in the initiation of meiotic recombination. Involved in the formation of DSBs at recombination hot-spots through meiosis-specific splicing of REC107 pre-mRNA. Collaborates with MER1 to promote splicing of essential meiotic mRNAs REC10, AMA1, MER3, HFM1, SPO22 and PCH2. NAM8 interacts with the pre-mRNA downstream of the 5' splice site, in a region of non-conserved sequence and is required for efficient splicing of uncapped RNA precursor. This is Protein NAM8 from Saccharomyces cerevisiae (strain ATCC 204508 / S288c) (Baker's yeast).